The primary structure comprises 690 residues: Glutamate--cysteine ligase (690 aa).

2 stretches are compositionally biased toward low complexity: residues 574–585 and 598–619; these read QQQNGHVNNNNN and NGST…TNGT. The segment at 574 to 620 is disordered; it reads QQQNGHVNNNNNNDKKTKNDPIIVNGSTTTTNGTNSGSGITETNGTM.

This sequence belongs to the glutamate--cysteine ligase type 3 family.

It carries out the reaction L-cysteine + L-glutamate + ATP = gamma-L-glutamyl-L-cysteine + ADP + phosphate + H(+). It functions in the pathway sulfur metabolism; glutathione biosynthesis; glutathione from L-cysteine and L-glutamate: step 1/2. The polypeptide is Glutamate--cysteine ligase (GCS1) (Candida albicans (Yeast)).